A 503-amino-acid polypeptide reads, in one-letter code: Aspartyl/glutamyl-tRNA(Asn/Gln) amidotransferase subunit B (503 aa).

It belongs to the GatB/GatE family. GatB subfamily. In terms of assembly, heterotrimer of A, B and C subunits.

The catalysed reaction is L-glutamyl-tRNA(Gln) + L-glutamine + ATP + H2O = L-glutaminyl-tRNA(Gln) + L-glutamate + ADP + phosphate + H(+). It carries out the reaction L-aspartyl-tRNA(Asn) + L-glutamine + ATP + H2O = L-asparaginyl-tRNA(Asn) + L-glutamate + ADP + phosphate + 2 H(+). In terms of biological role, allows the formation of correctly charged Asn-tRNA(Asn) or Gln-tRNA(Gln) through the transamidation of misacylated Asp-tRNA(Asn) or Glu-tRNA(Gln) in organisms which lack either or both of asparaginyl-tRNA or glutaminyl-tRNA synthetases. The reaction takes place in the presence of glutamine and ATP through an activated phospho-Asp-tRNA(Asn) or phospho-Glu-tRNA(Gln). The chain is Aspartyl/glutamyl-tRNA(Asn/Gln) amidotransferase subunit B from Rhodococcus jostii (strain RHA1).